Reading from the N-terminus, the 225-residue chain is Ribose-5-phosphate isomerase A (225 aa).

Substrate-binding positions include 27–30 (SGST), 80–83 (DGAD), and 93–96 (KGGG). The active-site Proton acceptor is the Glu102. Lys120 contacts substrate.

Belongs to the ribose 5-phosphate isomerase family. As to quaternary structure, homodimer.

It carries out the reaction aldehydo-D-ribose 5-phosphate = D-ribulose 5-phosphate. The protein operates within carbohydrate degradation; pentose phosphate pathway; D-ribose 5-phosphate from D-ribulose 5-phosphate (non-oxidative stage): step 1/1. In terms of biological role, catalyzes the reversible conversion of ribose-5-phosphate to ribulose 5-phosphate. The sequence is that of Ribose-5-phosphate isomerase A from Korarchaeum cryptofilum (strain OPF8).